We begin with the raw amino-acid sequence, 430 residues long: Endo-beta-1,4-glucanase celB (430 aa).

The first 16 residues, 1 to 16 (MALLLSLSLLATTISA), serve as a signal peptide directing secretion. Residues asparagine 43 and asparagine 153 are each glycosylated (N-linked (GlcNAc...) asparagine). The active-site Nucleophile is the glutamate 216. The Proton donor role is filled by glutamate 221. N-linked (GlcNAc...) asparagine glycosylation is present at asparagine 395.

The protein belongs to the glycosyl hydrolase 7 (cellulase C) family.

Its subcellular location is the secreted. It catalyses the reaction Endohydrolysis of (1-&gt;4)-beta-D-glucosidic linkages in cellulose, lichenin and cereal beta-D-glucans.. Its function is as follows. Has endoglucanase activity on substrates containing beta-1,4 glycosidic bonds, like in carboxymethylcellulose (CMC), hydroxyethylcellulose (HEC) and beta-glucan. Involved in the degradation of complex natural cellulosic substrates. The sequence is that of Endo-beta-1,4-glucanase celB (celB) from Emericella nidulans (strain FGSC A4 / ATCC 38163 / CBS 112.46 / NRRL 194 / M139) (Aspergillus nidulans).